The chain runs to 207 residues: dITP/XTP pyrophosphatase (207 aa).

11-16 contacts substrate; sequence TGNPGK. Catalysis depends on Asp72, which acts as the Proton acceptor. Asp72 contributes to the Mg(2+) binding site. Residues Ser73, 154–157, Lys177, and 182–183 each bind substrate; these read FGYD and HR.

Belongs to the HAM1 NTPase family. As to quaternary structure, homodimer. It depends on Mg(2+) as a cofactor.

It carries out the reaction XTP + H2O = XMP + diphosphate + H(+). The enzyme catalyses dITP + H2O = dIMP + diphosphate + H(+). It catalyses the reaction ITP + H2O = IMP + diphosphate + H(+). Pyrophosphatase that catalyzes the hydrolysis of nucleoside triphosphates to their monophosphate derivatives, with a high preference for the non-canonical purine nucleotides XTP (xanthosine triphosphate), dITP (deoxyinosine triphosphate) and ITP. Seems to function as a house-cleaning enzyme that removes non-canonical purine nucleotides from the nucleotide pool, thus preventing their incorporation into DNA/RNA and avoiding chromosomal lesions. The chain is dITP/XTP pyrophosphatase from Thermus thermophilus (strain ATCC 27634 / DSM 579 / HB8).